The sequence spans 394 residues: Acetate kinase (394 aa).

Asn-10 contributes to the Mg(2+) binding site. Lys-17 contributes to the ATP binding site. Position 87 (Arg-87) interacts with substrate. Asp-144 (proton donor/acceptor) is an active-site residue. ATP contacts are provided by residues 204–208 (HLGNG), 279–281 (DMR), and 327–331 (GIGEN). Position 381 (Glu-381) interacts with Mg(2+).

Belongs to the acetokinase family. As to quaternary structure, homodimer. Mg(2+) serves as cofactor. It depends on Mn(2+) as a cofactor.

The protein resides in the cytoplasm. The enzyme catalyses acetate + ATP = acetyl phosphate + ADP. It participates in metabolic intermediate biosynthesis; acetyl-CoA biosynthesis; acetyl-CoA from acetate: step 1/2. In terms of biological role, catalyzes the formation of acetyl phosphate from acetate and ATP. Can also catalyze the reverse reaction. The sequence is that of Acetate kinase from Ectopseudomonas mendocina (strain ymp) (Pseudomonas mendocina).